Reading from the N-terminus, the 176-residue chain is ATP synthase subunit delta (176 aa).

Belongs to the ATPase delta chain family. In terms of assembly, F-type ATPases have 2 components, F(1) - the catalytic core - and F(0) - the membrane proton channel. F(1) has five subunits: alpha(3), beta(3), gamma(1), delta(1), epsilon(1). F(0) has three main subunits: a(1), b(2) and c(10-14). The alpha and beta chains form an alternating ring which encloses part of the gamma chain. F(1) is attached to F(0) by a central stalk formed by the gamma and epsilon chains, while a peripheral stalk is formed by the delta and b chains.

The protein resides in the cell inner membrane. Functionally, f(1)F(0) ATP synthase produces ATP from ADP in the presence of a proton or sodium gradient. F-type ATPases consist of two structural domains, F(1) containing the extramembraneous catalytic core and F(0) containing the membrane proton channel, linked together by a central stalk and a peripheral stalk. During catalysis, ATP synthesis in the catalytic domain of F(1) is coupled via a rotary mechanism of the central stalk subunits to proton translocation. In terms of biological role, this protein is part of the stalk that links CF(0) to CF(1). It either transmits conformational changes from CF(0) to CF(1) or is implicated in proton conduction. This is ATP synthase subunit delta from Campylobacter curvus (strain 525.92).